The chain runs to 299 residues: MATVLRAHSEHATWRDYLELTKPRVVLLMLITSLVGMFLATRAGVPWTVLLFGNLGIGLCAGAAAAVNHVVDRRIDSIMARTHKRPVTAGRVSPAAAIAFALLLATAGMGLLLLFTNQLAAWLTLASLLGYAVIYTGFLKRATPQNIVIGGLAGAAPPLLGWVAVTGHLSAEPLLLVLIIFAWTPPHFWALAIHRKAEYAKADIPMLPVTHGEHYTKVHILLYTLVMFAVTLLPYAIHMSGPLYLVCALLLGARFLHWAWVLYRDSKPHAAINTFKYSIWYLFLLFIALLADHYLLLNI.

Transmembrane regions (helical) follow at residues V25–V45, W47–V67, A95–F115, L119–L139, I147–G167, P173–I193, V218–H238, L243–Y263, and I279–I299.

It belongs to the UbiA prenyltransferase family. Protoheme IX farnesyltransferase subfamily.

The protein resides in the cell inner membrane. It catalyses the reaction heme b + (2E,6E)-farnesyl diphosphate + H2O = Fe(II)-heme o + diphosphate. It participates in porphyrin-containing compound metabolism; heme O biosynthesis; heme O from protoheme: step 1/1. In terms of biological role, converts heme B (protoheme IX) to heme O by substitution of the vinyl group on carbon 2 of heme B porphyrin ring with a hydroxyethyl farnesyl side group. The protein is Protoheme IX farnesyltransferase of Ectopseudomonas mendocina (strain ymp) (Pseudomonas mendocina).